The chain runs to 263 residues: Hydroxyacylglutathione hydrolase (263 aa).

His-60, His-62, Asp-64, His-65, His-120, Asp-137, and His-175 together coordinate Zn(2+).

The protein belongs to the metallo-beta-lactamase superfamily. Glyoxalase II family. As to quaternary structure, monomer. It depends on Zn(2+) as a cofactor.

It carries out the reaction an S-(2-hydroxyacyl)glutathione + H2O = a 2-hydroxy carboxylate + glutathione + H(+). It participates in secondary metabolite metabolism; methylglyoxal degradation; (R)-lactate from methylglyoxal: step 2/2. Functionally, thiolesterase that catalyzes the hydrolysis of S-D-lactoyl-glutathione to form glutathione and D-lactic acid. This chain is Hydroxyacylglutathione hydrolase, found in Shewanella pealeana (strain ATCC 700345 / ANG-SQ1).